A 291-amino-acid polypeptide reads, in one-letter code: tRNA pseudouridine synthase B (291 aa).

Asp-41 serves as the catalytic Nucleophile.

It belongs to the pseudouridine synthase TruB family. Type 1 subfamily.

The enzyme catalyses uridine(55) in tRNA = pseudouridine(55) in tRNA. Responsible for synthesis of pseudouridine from uracil-55 in the psi GC loop of transfer RNAs. The polypeptide is tRNA pseudouridine synthase B (Parasynechococcus marenigrum (strain WH8102)).